We begin with the raw amino-acid sequence, 470 residues long: 3-isopropylmalate dehydratase large subunit (470 aa).

Positions 349, 410, and 413 each coordinate [4Fe-4S] cluster.

Belongs to the aconitase/IPM isomerase family. LeuC type 1 subfamily. As to quaternary structure, heterodimer of LeuC and LeuD. The cofactor is [4Fe-4S] cluster.

It catalyses the reaction (2R,3S)-3-isopropylmalate = (2S)-2-isopropylmalate. It functions in the pathway amino-acid biosynthesis; L-leucine biosynthesis; L-leucine from 3-methyl-2-oxobutanoate: step 2/4. Catalyzes the isomerization between 2-isopropylmalate and 3-isopropylmalate, via the formation of 2-isopropylmaleate. The chain is 3-isopropylmalate dehydratase large subunit from Nitrosomonas europaea (strain ATCC 19718 / CIP 103999 / KCTC 2705 / NBRC 14298).